The sequence spans 766 residues: 5-methyltetrahydropteroyltriglutamate--homocysteine methyltransferase 1 (766 aa).

2 residues coordinate 5-methyltetrahydropteroyltri-L-glutamate: lysine 18 and asparagine 116. L-homocysteine-binding positions include 438–440 and glutamate 491; that span reads IGS. Residues 438 to 440 and glutamate 491 contribute to the L-methionine site; that span reads IGS. Residues aspartate 496, tyrosine 519, 522–523, and tryptophan 568 contribute to the 5-methyltetrahydropteroyltri-L-glutamate site; that span reads RC. Aspartate 606 serves as a coordination point for L-homocysteine. Aspartate 606 contributes to the L-methionine binding site. 4 residues coordinate Zn(2+): histidine 648, cysteine 650, histidine 659, and glutamate 672. Catalysis depends on histidine 702, which acts as the Proton donor. Position 734 (cysteine 734) interacts with Zn(2+).

This sequence belongs to the vitamin-B12 independent methionine synthase family. Zn(2+) is required as a cofactor.

The protein localises to the cytoplasm. It localises to the cytosol. It catalyses the reaction 5-methyltetrahydropteroyltri-L-glutamate + L-homocysteine = tetrahydropteroyltri-L-glutamate + L-methionine. It participates in amino-acid biosynthesis; L-methionine biosynthesis via de novo pathway; L-methionine from L-homocysteine (MetE route): step 1/1. Catalyzes the transfer of a methyl group from 5-methyltetrahydrofolate to homocysteine resulting in methionine formation. This is 5-methyltetrahydropteroyltriglutamate--homocysteine methyltransferase 1 from Oryza sativa subsp. japonica (Rice).